The sequence spans 660 residues: GTP-binding protein BRASSINAZOLE INSENSITIVE PALE GREEN 2, chloroplastic (660 aa).

The N-terminal 53 residues, Met1–Met53, are a transit peptide targeting the chloroplast. Disordered regions lie at residues Glu127–Met158 and Asn191–Lys212. The span at Glu130–Met158 shows a compositional bias: acidic residues. Positions Ser273 to Pro457 constitute a CP-type G domain.

It belongs to the TRAFAC class YlqF/YawG GTPase family. In terms of assembly, binds to chloroplast 16S and 23S ribosomal RNAs. As to expression, mostly expressed in stems, petioles, leaves and flowers and, at low levels, also in roots.

The protein resides in the plastid. The protein localises to the chloroplast stroma. Required for brassinosteroid- (BR) mediated post-transcriptional and translational regulation in the chloroplast, including accumulation of chloroplast rRNA. Involved in chloroplast differentiation. The protein is GTP-binding protein BRASSINAZOLE INSENSITIVE PALE GREEN 2, chloroplastic of Arabidopsis thaliana (Mouse-ear cress).